The primary structure comprises 384 residues: ATP phosphoribosyltransferase regulatory subunit (384 aa).

This sequence belongs to the class-II aminoacyl-tRNA synthetase family. HisZ subfamily. As to quaternary structure, heteromultimer composed of HisG and HisZ subunits.

It is found in the cytoplasm. Its pathway is amino-acid biosynthesis; L-histidine biosynthesis; L-histidine from 5-phospho-alpha-D-ribose 1-diphosphate: step 1/9. Required for the first step of histidine biosynthesis. May allow the feedback regulation of ATP phosphoribosyltransferase activity by histidine. The protein is ATP phosphoribosyltransferase regulatory subunit of Rhodospirillum rubrum (strain ATCC 11170 / ATH 1.1.1 / DSM 467 / LMG 4362 / NCIMB 8255 / S1).